The primary structure comprises 457 residues: ATP-dependent RNA helicase DbpA (457 aa).

A Q motif motif is present at residues 3–31; it reads AFSTLNVLPPAQLTNLNELGYLTMTPVQA. Residues 34–205 form the Helicase ATP-binding domain; the sequence is LPAILAGKDV…GRVQRDPLAI (172 aa). 47 to 54 provides a ligand contact to ATP; the sequence is AKTGSGKT. Positions 153-156 match the DEAD box motif; the sequence is DEAD. The 147-residue stretch at 230 to 376 folds into the Helicase C-terminal domain; it reads PLLQRLLSLH…QTPPANSSIA (147 aa). An involved in 23S rRNA binding region spans residues 383-457; that stretch reads ATLCIDGGKK…GKTCRVRLLK (75 aa).

This sequence belongs to the DEAD box helicase family. DbpA subfamily. In terms of assembly, monomer.

It localises to the cytoplasm. The catalysed reaction is ATP + H2O = ADP + phosphate + H(+). Requires hairpin 92 of 23S rRNA for optimal activity. ATPase activity is stimulated by interaction of the N-terminal domain with RNA. DEAD-box RNA helicase involved in the assembly of the 50S ribosomal subunit. Has an RNA-dependent ATPase activity, which is specific for 23S rRNA, and a 3' to 5' RNA helicase activity that uses the energy of ATP hydrolysis to destabilize and unwind short rRNA duplexes. Requires a single-stranded RNA loading site on the 3' side of the substrate helix. The sequence is that of ATP-dependent RNA helicase DbpA from Escherichia coli (strain K12).